The sequence spans 849 residues: Probable receptor-like protein kinase At1g30570 (849 aa).

An N-terminal signal peptide occupies residues 1–28; sequence MSKLRKKYLEHLLCVLIFFTYVIGYGEA. At 29–429 the chain is on the extracellular side; it reads QSKSFLVDCG…GHSVSDSKMR (401 aa). Asn40, Asn57, Asn94, Asn122, Asn158, Asn268, Asn271, Asn305, and Asn343 each carry an N-linked (GlcNAc...) asparagine glycan. Residues 430–450 traverse the membrane as a helical segment; sequence IIWISVGAGIAIIIFFVFLGI. Over 451-849 the chain is Cytoplasmic; that stretch reads LVVCLCKKRR…QTGSALHNSA (399 aa). In terms of domain architecture, Protein kinase spans 520–793; that stretch reads FDDGLAIGVG…GEVLWSLEYV (274 aa). Residues 526–534 and Lys548 each bind ATP; that span reads IGVGGFGKV. Catalysis depends on Asp644, which acts as the Proton acceptor. Residues 810–849 form a disordered region; that stretch reads FSSSQAVEEAPESFTLPACSNQDSSETEQSQTGSALHNSA. Residues 827–849 show a composition bias toward polar residues; that stretch reads ACSNQDSSETEQSQTGSALHNSA.

The protein belongs to the protein kinase superfamily. Ser/Thr protein kinase family.

It is found in the cell membrane. The protein is Probable receptor-like protein kinase At1g30570 of Arabidopsis thaliana (Mouse-ear cress).